The sequence spans 71 residues: Ranatuerin-2Va (71 aa).

The first 22 residues, 1–22, serve as a signal peptide directing secretion; that stretch reads MFTLKKSFLLLFFLGTITLSLC. Positions 23–43 are excised as a propeptide; sequence EQERGADEDDGVEMTEEEVKR. An intrachain disulfide couples C66 to C71.

As to expression, expressed by the skin glands.

It localises to the secreted. Its function is as follows. Antimicrobial peptide. The chain is Ranatuerin-2Va from Odorrana versabilis (Chinese bamboo leaf odorous frog).